The sequence spans 147 residues: Mannitol-specific cryptic phosphotransferase enzyme IIA component (147 aa).

In terms of domain architecture, PTS EIIA type-2 spans 5 to 147 (DYFPESSISV…KQLADIISRG (143 aa)). Histidine 67 (tele-phosphohistidine intermediate) is an active-site residue. Histidine 67 carries the post-translational modification Phosphohistidine; by HPr.

The protein localises to the cytoplasm. Its function is as follows. The phosphoenolpyruvate-dependent sugar phosphotransferase system (sugar PTS), a major carbohydrate active transport system, catalyzes the phosphorylation of incoming sugar substrates concomitantly with their translocation across the cell membrane. The enzyme II CmtAB PTS system is involved in D-mannitol transport. This chain is Mannitol-specific cryptic phosphotransferase enzyme IIA component (cmtB), found in Escherichia coli O157:H7.